We begin with the raw amino-acid sequence, 334 residues long: tRNA uridine(34) hydroxylase (334 aa).

One can recognise a Rhodanese domain in the interval 123–217 (SDPDVILVDT…YLEEVKAEES (95 aa)). The active-site Cysteine persulfide intermediate is cysteine 177.

Belongs to the TrhO family.

The catalysed reaction is uridine(34) in tRNA + AH2 + O2 = 5-hydroxyuridine(34) in tRNA + A + H2O. Functionally, catalyzes oxygen-dependent 5-hydroxyuridine (ho5U) modification at position 34 in tRNAs. This chain is tRNA uridine(34) hydroxylase, found in Shewanella baltica (strain OS185).